Here is a 354-residue protein sequence, read N- to C-terminus: Selenide, water dikinase (354 aa).

The active site involves Sec-21. A non-standard amino acid (selenocysteine) is located at residue Sec-21. Residues Lys-24 and Thr-51 to Asp-53 contribute to the ATP site. Residue Asp-54 coordinates Mg(2+). Residues Asp-71, Asp-94, and Gly-141–Thr-143 each bind ATP. Mg(2+) is bound at residue Asp-94. A Mg(2+)-binding site is contributed by Asp-229.

The protein belongs to the selenophosphate synthase 1 family. Class I subfamily. As to quaternary structure, homodimer. Mg(2+) is required as a cofactor.

The enzyme catalyses hydrogenselenide + ATP + H2O = selenophosphate + AMP + phosphate + 2 H(+). Synthesizes selenophosphate from selenide and ATP. In Treponema denticola (strain ATCC 35405 / DSM 14222 / CIP 103919 / JCM 8153 / KCTC 15104), this protein is Selenide, water dikinase.